Consider the following 213-residue polypeptide: Glycerol-3-phosphate acyltransferase (213 aa).

Transmembrane regions (helical) follow at residues isoleucine 4 to glycine 24, isoleucine 48 to alanine 68, leucine 71 to isoleucine 91, valine 113 to leucine 133, valine 144 to leucine 164, and threonine 165 to arginine 185.

The protein belongs to the PlsY family. In terms of assembly, probably interacts with PlsX.

The protein resides in the cell membrane. The catalysed reaction is an acyl phosphate + sn-glycerol 3-phosphate = a 1-acyl-sn-glycero-3-phosphate + phosphate. The protein operates within lipid metabolism; phospholipid metabolism. In terms of biological role, catalyzes the transfer of an acyl group from acyl-phosphate (acyl-PO(4)) to glycerol-3-phosphate (G3P) to form lysophosphatidic acid (LPA). This enzyme utilizes acyl-phosphate as fatty acyl donor, but not acyl-CoA or acyl-ACP. In Lactococcus lactis subsp. lactis (strain IL1403) (Streptococcus lactis), this protein is Glycerol-3-phosphate acyltransferase.